Here is a 76-residue protein sequence, read N- to C-terminus: MAKRDDRSNNPERIENIIGNTLQNMDEARDYAKAHSEELSEEEKQEIEQKNERREQSIDGLREELKDEVNDQKNNS.

Basic and acidic residues-rich tracts occupy residues 1–15, 26–38, and 46–76; these read MAKR…ERIE, DEAR…HSEE, and EIEQ…KNNS. A disordered region spans residues 1–76; the sequence is MAKRDDRSNN…DEVNDQKNNS (76 aa).

Belongs to the Tlp family.

The protein localises to the spore core. The chain is Small, acid-soluble spore protein Tlp from Shouchella clausii (strain KSM-K16) (Alkalihalobacillus clausii).